We begin with the raw amino-acid sequence, 234 residues long: AA9 family lytic polysaccharide monooxygenase D (234 aa).

The first 18 residues, 1–18 (MRIEKLLNAALLAGAVSA), serve as a signal peptide directing secretion. Residues His19 and His95 each contribute to the Cu(2+) site. Cys57 and Cys182 are joined by a disulfide. The O2 site is built by His168 and Gln177. Tyr179 provides a ligand contact to Cu(2+).

This sequence belongs to the polysaccharide monooxygenase AA9 family. Cu(2+) serves as cofactor.

It localises to the secreted. The catalysed reaction is [(1-&gt;4)-beta-D-glucosyl]n+m + reduced acceptor + O2 = 4-dehydro-beta-D-glucosyl-[(1-&gt;4)-beta-D-glucosyl]n-1 + [(1-&gt;4)-beta-D-glucosyl]m + acceptor + H2O.. Lytic polysaccharide monooxygenase (LPMO) that depolymerizes crystalline and amorphous polysaccharides via the oxidation of scissile alpha- or beta-(1-4)-glycosidic bonds, yielding C1 or C4 oxidation products. Catalysis by LPMOs requires the reduction of the active-site copper from Cu(II) to Cu(I) by a reducing agent and H(2)O(2) or O(2) as a cosubstrate. This chain is AA9 family lytic polysaccharide monooxygenase D, found in Malbranchea cinnamomea (Thermophilic fungus).